Consider the following 158-residue polypeptide: Putative 8-oxo-dGTP diphosphatase YtkD (158 aa).

The region spanning 6 to 145 (DYYQNTVQLS…SFIMKDSVLP (140 aa)) is the Nudix hydrolase domain. A Nudix box motif is present at residues 53-74 (GKVEPMECAEEAALREVKEETG). Residues glutamate 68 and glutamate 72 each contribute to the Mg(2+) site.

It belongs to the Nudix hydrolase family. The cofactor is Mg(2+).

It carries out the reaction 8-oxo-dGTP + H2O = 8-oxo-dGMP + diphosphate + H(+). With respect to regulation, not induced by oxidative damage (following treatment with paraquat or hydrogen peroxide). Not induced by mitomycin C. Not induced by sigma-B general stress inducers such as sodium chloride, ethanol or heat. Functionally, involved in the GO system responsible for removing an oxidatively damaged form of guanine (7,8-dihydro-8-oxoguanine, 8-oxo-dGTP) from DNA and the nucleotide pool. 8-oxo-dGTP is inserted opposite dA and dC residues of template DNA with almost equal efficiency thus leading to A.T to G.C transversions. Functions, in conjunction with MutT, to protect vegetatively growing cells from DNA-damaging agents such as H(2)O(2) or t-BHP (t-butylhydroperoxide). The 2 proteins do not however protect spores. According to PubMed:15576788, phosphohydrolase that catalyzes the hydrolysis of all common nucleoside triphosphates as well as of the mutagenic analog 8-oxo-dGTP. The high catalytic efficiency on dGTP is in contrast to results from PubMed:14761999. According to PubMed:14761999, catalyzes the hydrolysis of 8-oxo-dGTP with a specific activity 413 times higher than that exhibited against dGTP. Preferentially catalyzes the hydrolysis of 8-oxo-dGTP and 8-oxo-GTP. According to PubMed:15576788, hydrolyzes nucleoside triphosphates in a stepwise fashion through the diphosphate to the monophosphate, releasing two molecules of inorganic orthophosphate. The sequence is that of Putative 8-oxo-dGTP diphosphatase YtkD (ytkD) from Bacillus subtilis (strain 168).